The sequence spans 119 residues: Large ribosomal subunit protein bL20 (119 aa).

This sequence belongs to the bacterial ribosomal protein bL20 family.

Binds directly to 23S ribosomal RNA and is necessary for the in vitro assembly process of the 50S ribosomal subunit. It is not involved in the protein synthesizing functions of that subunit. The sequence is that of Large ribosomal subunit protein bL20 from Acidovorax ebreus (strain TPSY) (Diaphorobacter sp. (strain TPSY)).